The sequence spans 331 residues: Flotillin-like protein FloA (331 aa).

The next 2 membrane-spanning stretches (helical) occupy residues 6-26 (LMIL…FTFV) and 28-48 (VMLW…TLVG). The segment at 236-331 (QTDQAEADKN…KDPSDEDRKS (96 aa)) is required for correct localization. 4 consecutive short sequence motifs (EA repeat) follow at residues 240 to 242 (AEA), 251 to 253 (AEE), 278 to 282 (EAEAE), and 288 to 290 (AEA). The disordered stretch occupies residues 312-331 (EMRDSFGKLTKDPSDEDRKS).

It belongs to the flotillin-like FloA family. As to quaternary structure, homooligomerizes. Interacts with FloT. Interacts with FtsH midcell. Interacts with PhoR, colocalizes with PhoR in FloA-only membrane rafts.

The protein localises to the cell membrane. Its subcellular location is the membrane raft. Found in functional membrane microdomains (FMM) that may be equivalent to eukaryotic membrane rafts. FMMs are highly dynamic and increase in number as cells age. FloA and FloT function is partially redundant; double deletions have marked synthetic phenotypes. Flotillins are thought to be important factors in membrane fluidity, especially during periods of rapid growth in rich media. Whether specific proteins are associated with FMMs is controversial; in one study FloT rafts have been shown to include proteins involved in adaptation to stationary phase, while FloA-FloT rafts include proteins involved in differentiation including sporulation, biofilm formation and DNA uptake competence. Another (more finely resolved) study only showed association of NfeD2 with FloT rafts of all the proteins examined. Involved in spatial organization of membranes, perhaps recruiting proteins to specific membrane regions. Simultaneous overexpression of both FloA and FloT leads to defects in cell division and differentiation, in part caused by stabilization of FtsH and its subsequent increased ability to degrade proteins. Cells make more biofilm, are about half as long, have less EzrA and more frequent Z-rings. The polypeptide is Flotillin-like protein FloA (Bacillus subtilis (strain 168)).